The following is a 673-amino-acid chain: Annexin A6 (673 aa).

A2 carries the N-acetylalanine modification. S13 is subject to Phosphoserine. Annexin repeat units lie at residues 20–91 (FDAN…NLMR), 92–163 (PLAY…VLLQ), 175–247 (DLVQ…AVVK), 251–322 (STPE…KLCG), 363–434 (FNPD…GLMM), 435–506 (PPAH…SLAT), 521–595 (EDAQ…AIVQ), and 599–670 (NKPL…ALCG). At Y30 the chain carries Phosphotyrosine. Residues K63, K68, K75, and K81 each carry the N6-acetyllysine modification. Residue Y201 is modified to Phosphotyrosine. N6-acetyllysine occurs at positions 306, 370, and 418. S422 carries the post-translational modification Phosphoserine. K483 carries the post-translational modification N6-acetyllysine. S537 carries the post-translational modification Phosphoserine. An N6-acetyllysine modification is found at K620.

This sequence belongs to the annexin family.

Its subcellular location is the cytoplasm. It localises to the melanosome. May associate with CD21. May regulate the release of Ca(2+) from intracellular stores. This chain is Annexin A6 (Anxa6), found in Rattus norvegicus (Rat).